Consider the following 374-residue polypeptide: Zinc finger CCCH domain-containing protein 15 homolog (374 aa).

The segment at 1-20 (MPPKQQGPSKKSEQKRKEKV) is disordered. The span at 10 to 20 (KKSEQKRKEKV) shows a compositional bias: basic and acidic residues. 2 consecutive C3H1-type zinc fingers follow at residues 90–117 (DPKS…HDLA) and 166–199 (VCKY…HCLP).

It belongs to the ZC3H15/TMA46 family.

The protein is Zinc finger CCCH domain-containing protein 15 homolog of Caenorhabditis elegans.